The sequence spans 218 residues: Small ribosomal subunit protein uS3 (218 aa).

The region spanning 38 to 106 (IRKFIATKLA…RVHINIVEIK (69 aa)) is the KH type-2 domain.

Belongs to the universal ribosomal protein uS3 family. In terms of assembly, part of the 30S ribosomal subunit. Forms a tight complex with proteins S10 and S14.

Binds the lower part of the 30S subunit head. Binds mRNA in the 70S ribosome, positioning it for translation. This is Small ribosomal subunit protein uS3 from Enterococcus faecalis (strain ATCC 700802 / V583).